The chain runs to 243 residues: Probable transcriptional regulatory protein Tbd_2215 (243 aa).

The protein belongs to the TACO1 family.

Its subcellular location is the cytoplasm. The protein is Probable transcriptional regulatory protein Tbd_2215 of Thiobacillus denitrificans (strain ATCC 25259 / T1).